Here is a 180-residue protein sequence, read N- to C-terminus: ATP-dependent protease subunit HslV (180 aa).

Residue T7 is part of the active site. 3 residues coordinate Na(+): G165, C168, and T171.

Belongs to the peptidase T1B family. HslV subfamily. As to quaternary structure, a double ring-shaped homohexamer of HslV is capped on each side by a ring-shaped HslU homohexamer. The assembly of the HslU/HslV complex is dependent on binding of ATP.

The protein resides in the cytoplasm. It catalyses the reaction ATP-dependent cleavage of peptide bonds with broad specificity.. With respect to regulation, allosterically activated by HslU binding. Protease subunit of a proteasome-like degradation complex believed to be a general protein degrading machinery. The protein is ATP-dependent protease subunit HslV of Bacillus cereus (strain Q1).